A 214-amino-acid chain; its full sequence is Ribosomal RNA small subunit methyltransferase G (214 aa).

S-adenosyl-L-methionine contacts are provided by residues glycine 81, methionine 86, 132–133, and arginine 147; that span reads VE.

It belongs to the methyltransferase superfamily. RNA methyltransferase RsmG family.

It localises to the cytoplasm. The enzyme catalyses guanosine(527) in 16S rRNA + S-adenosyl-L-methionine = N(7)-methylguanosine(527) in 16S rRNA + S-adenosyl-L-homocysteine. Specifically methylates the N7 position of guanine in position 527 of 16S rRNA. The protein is Ribosomal RNA small subunit methyltransferase G of Pseudomonas paraeruginosa (strain DSM 24068 / PA7) (Pseudomonas aeruginosa (strain PA7)).